A 670-amino-acid polypeptide reads, in one-letter code: DNA ligase (670 aa).

Residues 35 to 39 (DSVYD), 84 to 85 (SL), and E116 contribute to the NAD(+) site. The active-site N6-AMP-lysine intermediate is K118. Residues R139, E176, K293, and K317 each coordinate NAD(+). Residues C411, C414, C429, and C435 each coordinate Zn(2+). In terms of domain architecture, BRCT spans 592-670 (VVKSEIAGKT…EEAFLKLLKS (79 aa)).

This sequence belongs to the NAD-dependent DNA ligase family. LigA subfamily. It depends on Mg(2+) as a cofactor. Mn(2+) is required as a cofactor.

The catalysed reaction is NAD(+) + (deoxyribonucleotide)n-3'-hydroxyl + 5'-phospho-(deoxyribonucleotide)m = (deoxyribonucleotide)n+m + AMP + beta-nicotinamide D-nucleotide.. Functionally, DNA ligase that catalyzes the formation of phosphodiester linkages between 5'-phosphoryl and 3'-hydroxyl groups in double-stranded DNA using NAD as a coenzyme and as the energy source for the reaction. It is essential for DNA replication and repair of damaged DNA. The polypeptide is DNA ligase (Coxiella burnetii (strain Dugway 5J108-111)).